The chain runs to 194 residues: Dof zinc finger protein DOF4.2 (194 aa).

The segment at 21 to 75 adopts a Dof-type zinc-finger fold; the sequence is RVCPRCYSDQTRFSYFNNNKKSQPRYKCKNCCRCWTHGGVLRNIPVTGICDKSNL. 4 residues coordinate Zn(2+): Cys-23, Cys-26, Cys-48, and Cys-51.

It is found in the nucleus. In terms of biological role, transcription factor that binds specifically to a 5'-AA[AG]G-3' consensus core sequence. The sequence is that of Dof zinc finger protein DOF4.2 (DOF4.2) from Arabidopsis thaliana (Mouse-ear cress).